The primary structure comprises 528 residues: FAD-dependent monooxygenase DEP2 (528 aa).

Positions 1–23 (MEDGRSTFKVIIIGAGVTGLTLA) are cleaved as a signal peptide. FAD is bound by residues aspartate 37, arginine 110, aspartate 311, and glycine 324. A helical membrane pass occupies residues 479-499 (VFPQILGVLMVMWSSVWLFHL). Asparagine 521 is a glycosylation site (N-linked (GlcNAc...) asparagine).

It belongs to the paxM FAD-dependent monooxygenase family. It depends on FAD as a cofactor.

Its subcellular location is the membrane. It functions in the pathway polyketide biosynthesis. Functionally, FAD-dependent monooxygenase; part of the gene cluster that mediates the biosynthesis of depudecin, a highly oxidized eleven-carbon linear polyketide that acts as a histone deacetylase (HDAC) inhibitor and makes a small contribution to pathogenesis. The reducing polyketide synthase DEP5 is the central enzyme in depudecin biosynthesis by yielding the backbone polyketide chain. The monooxygenases DEP2 and DEP4, as well as the uncharacterized protein DEP1, then act as tailoring enzymes to modify the intermediate polyketide chain into depudecin. The protein is FAD-dependent monooxygenase DEP2 of Alternaria brassicicola (Dark leaf spot agent).